A 111-amino-acid chain; its full sequence is Photosystem II reaction center Psb28 protein (111 aa).

It belongs to the Psb28 family. As to quaternary structure, part of the photosystem II complex.

It is found in the cellular thylakoid membrane. This Gloeothece citriformis (strain PCC 7424) (Cyanothece sp. (strain PCC 7424)) protein is Photosystem II reaction center Psb28 protein.